Reading from the N-terminus, the 312-residue chain is DNA-directed RNA polymerase subunit alpha (312 aa).

An alpha N-terminal domain (alpha-NTD) region spans residues 1-226; that stretch reads MIEFEKPIIT…EHLNLFTDLT (226 aa). Positions 243–312 are alpha C-terminal domain (alpha-CTD); sequence DEKVLDRTIE…DLGLGLKNDK (70 aa).

Belongs to the RNA polymerase alpha chain family. In terms of assembly, homodimer. The RNAP catalytic core consists of 2 alpha, 1 beta, 1 beta' and 1 omega subunit. When a sigma factor is associated with the core the holoenzyme is formed, which can initiate transcription.

It carries out the reaction RNA(n) + a ribonucleoside 5'-triphosphate = RNA(n+1) + diphosphate. DNA-dependent RNA polymerase catalyzes the transcription of DNA into RNA using the four ribonucleoside triphosphates as substrates. In Streptococcus mutans serotype c (strain ATCC 700610 / UA159), this protein is DNA-directed RNA polymerase subunit alpha.